A 312-amino-acid polypeptide reads, in one-letter code: Urease accessory protein UreD (312 aa).

A compositionally biased stretch (basic and acidic residues) spans M1–Q15. The interval M1 to V24 is disordered.

It belongs to the UreD family. UreD, UreF and UreG form a complex that acts as a GTP-hydrolysis-dependent molecular chaperone, activating the urease apoprotein by helping to assemble the nickel containing metallocenter of UreC. The UreE protein probably delivers the nickel.

Its subcellular location is the cytoplasm. Its function is as follows. Required for maturation of urease via the functional incorporation of the urease nickel metallocenter. In Hahella chejuensis (strain KCTC 2396), this protein is Urease accessory protein UreD.